The chain runs to 326 residues: Malate dehydrogenase (326 aa).

12-18 (GGTGQIA) lines the NAD(+) pocket. Substrate contacts are provided by Arg93 and Arg99. NAD(+) contacts are provided by residues Asn106, Gln113, and 130 to 132 (VGN). The substrate site is built by Asn132 and Arg163. His188 (proton acceptor) is an active-site residue.

Belongs to the LDH/MDH superfamily. MDH type 2 family.

It catalyses the reaction (S)-malate + NAD(+) = oxaloacetate + NADH + H(+). Its function is as follows. Catalyzes the reversible oxidation of malate to oxaloacetate. In Chlamydia trachomatis serovar L2 (strain ATCC VR-902B / DSM 19102 / 434/Bu), this protein is Malate dehydrogenase.